The following is a 358-amino-acid chain: Fructose-bisphosphate aldolase class 2 (358 aa).

S61 serves as a coordination point for D-glyceraldehyde 3-phosphate. The Proton donor role is filled by D109. Residues H110, D144, E174, and H226 each coordinate Zn(2+). A dihydroxyacetone phosphate-binding site is contributed by G227. Residue H264 participates in Zn(2+) binding. Residues 265–267 (GGS) and 286–289 (NIDT) each bind dihydroxyacetone phosphate.

It belongs to the class II fructose-bisphosphate aldolase family. It depends on Zn(2+) as a cofactor.

It carries out the reaction beta-D-fructose 1,6-bisphosphate = D-glyceraldehyde 3-phosphate + dihydroxyacetone phosphate. The protein operates within carbohydrate degradation; glycolysis; D-glyceraldehyde 3-phosphate and glycerone phosphate from D-glucose: step 4/4. In terms of biological role, catalyzes the aldol condensation of dihydroxyacetone phosphate (DHAP or glycerone-phosphate) with glyceraldehyde 3-phosphate (G3P) to form fructose 1,6-bisphosphate (FBP) in gluconeogenesis and the reverse reaction in glycolysis. The sequence is that of Fructose-bisphosphate aldolase class 2 (fbaA) from Buchnera aphidicola subsp. Acyrthosiphon pisum (strain APS) (Acyrthosiphon pisum symbiotic bacterium).